Reading from the N-terminus, the 619-residue chain is Nuclear hormone receptor family member nhr-6 (619 aa).

Residues Met-1–Cys-18 are compositionally biased toward polar residues. Disordered stretches follow at residues Met-1–Ser-29, Met-58–Thr-86, Gln-103–Pro-134, and Gln-196–Pro-232. Over residues Ser-19–Ser-29 the composition is skewed to low complexity. Residues Lys-125–Pro-134 are compositionally biased toward polar residues. A compositionally biased stretch (low complexity) spans Gly-206 to Pro-232. The segment at residues Asp-265–His-340 is a DNA-binding region (nuclear receptor). NR C4-type zinc fingers lie at residues Cys-268 to Cys-288 and Cys-304 to Cys-328. Residues Gly-345 to Pro-365 form a disordered region. A compositionally biased stretch (basic residues) spans Arg-346 to Leu-356. Residues Pro-365–Ser-600 form the NR LBD domain. The AF-2 stretch occupies residues Leu-589 to Ser-600.

It belongs to the nuclear hormone receptor family. NR4 subfamily. In terms of tissue distribution, in hermaphrodites, expressed in the developing spermatheca and dorsal uterus. Expression includes the 8 cells of the dorsal somatic gonad primordium and the sujc cells that form the core of the spermatheca-uterine valve. Expressed in the precursor cells of the spermatheca-sheath lineages (SS cells) and in the precursors and descendents of the dorsal-uterine lineage (DU cells). In both hermaphroditic and male animals, expressed in a pair of head chemosensory neurons.

It localises to the nucleus. Functionally, transcriptional activator that induces gene expression by binding to the NGFI-B response element (NBRE) 5'-AAAGGTCA-3'. Required for proper morphogenesis of the spermatheca and the spermatheca-uterine valve formation. Promotes cell proliferation and differentiation of the spermatheca precursor cells during spermatheca development in larval stage L4. Might play a role in promoting G1/S phase progression in the spermatheca precursor cell lineage. Also required for the differentiation of the spermatheca-uterine junction core (sujc) cells which are generating the spermatheca-uterine valve. The protein is Nuclear hormone receptor family member nhr-6 (nhr-6) of Caenorhabditis elegans.